We begin with the raw amino-acid sequence, 498 residues long: Hexokinase-1 (498 aa).

The Hexokinase domain maps to 39-492 (AAAQRVVAEL…SGLGAALVAA (454 aa)). A hexokinase small subdomain region spans residues 95–233 (TGGEEGSYYA…GLDMRVSALI (139 aa)). Residues G109, T110, and N111 each coordinate ADP. The D-glucose site is built by T199, K200, N234, and D235. The interval 234–481 (NDTVGTLAAG…ERVVVKLASD (248 aa)) is hexokinase large subdomain. T258 contacts ADP. D-glucose is bound by residues N261, E290, and E321. Residue G446 coordinates ADP.

It belongs to the hexokinase family. As to expression, highly expressed in senescent leaves.

The catalysed reaction is a D-hexose + ATP = a D-hexose 6-phosphate + ADP + H(+). It carries out the reaction D-fructose + ATP = D-fructose 6-phosphate + ADP + H(+). It catalyses the reaction D-glucose + ATP = D-glucose 6-phosphate + ADP + H(+). The protein operates within carbohydrate metabolism; hexose metabolism. It functions in the pathway carbohydrate degradation; glycolysis; D-glyceraldehyde 3-phosphate and glycerone phosphate from D-glucose: step 1/4. Functionally, fructose and glucose phosphorylating enzyme. Acts as a positive regulator of leaf senescence by mediating glucose accumulation and inducing an increase in reactive oxygen species (ROS). This chain is Hexokinase-1 (HXK1), found in Oryza sativa subsp. japonica (Rice).